A 103-amino-acid chain; its full sequence is Signal recognition particle 19 kDa protein (103 aa).

This sequence belongs to the SRP19 family. Part of the signal recognition particle protein translocation system, which is composed of SRP and FtsY. Archaeal SRP consists of a 7S RNA molecule of 300 nucleotides and two protein subunits: SRP54 and SRP19.

The protein localises to the cytoplasm. Functionally, involved in targeting and insertion of nascent membrane proteins into the cytoplasmic membrane. Binds directly to 7S RNA and mediates binding of the 54 kDa subunit of the SRP. The protein is Signal recognition particle 19 kDa protein of Hyperthermus butylicus (strain DSM 5456 / JCM 9403 / PLM1-5).